The sequence spans 90 residues: Small ribosomal subunit protein bS16 (90 aa).

Belongs to the bacterial ribosomal protein bS16 family.

In Lactobacillus gasseri (strain ATCC 33323 / DSM 20243 / BCRC 14619 / CIP 102991 / JCM 1131 / KCTC 3163 / NCIMB 11718 / NCTC 13722 / AM63), this protein is Small ribosomal subunit protein bS16.